The primary structure comprises 74 residues: Putative ribosome-binding protein YbzG (74 aa).

The chain is Putative ribosome-binding protein YbzG (ybzG) from Bacillus subtilis (strain 168).